The primary structure comprises 209 residues: Yop proteins translocation protein K (209 aa).

Functionally, belongs to an operon involved in the translocation of Yop proteins across the bacterial membranes or in the specific control of this function. The sequence is that of Yop proteins translocation protein K (yscK) from Yersinia enterocolitica.